We begin with the raw amino-acid sequence, 212 residues long: ATP-dependent Clp protease proteolytic subunit (212 aa).

The active-site Nucleophile is the S106. Residue H131 is part of the active site.

The protein belongs to the peptidase S14 family. Fourteen ClpP subunits assemble into 2 heptameric rings which stack back to back to give a disk-like structure with a central cavity, resembling the structure of eukaryotic proteasomes.

Its subcellular location is the cytoplasm. The catalysed reaction is Hydrolysis of proteins to small peptides in the presence of ATP and magnesium. alpha-casein is the usual test substrate. In the absence of ATP, only oligopeptides shorter than five residues are hydrolyzed (such as succinyl-Leu-Tyr-|-NHMec, and Leu-Tyr-Leu-|-Tyr-Trp, in which cleavage of the -Tyr-|-Leu- and -Tyr-|-Trp bonds also occurs).. Functionally, cleaves peptides in various proteins in a process that requires ATP hydrolysis. Has a chymotrypsin-like activity. Plays a major role in the degradation of misfolded proteins. The chain is ATP-dependent Clp protease proteolytic subunit from Rhodopseudomonas palustris (strain ATCC BAA-98 / CGA009).